Consider the following 172-residue polypeptide: MQNKPSSYDREDLLASSRGELFGPNGPQLPAPNMLMMDRIPLMSETEGAFGKGKVIAELDITPDLWFFDCHFPGDPVMPGCLGLDAMWQLVGFFLGWIGGEGKGRALGVGEVKFTGQVLPTAKKVTYEIDFKRVINRKLVMGLADGRVLVDGKEIYVAKDLKVGLFQDTSAF.

Histidine 71 is an active-site residue.

It belongs to the thioester dehydratase family. FabA subfamily. In terms of assembly, homodimer.

The protein resides in the cytoplasm. It carries out the reaction a (3R)-hydroxyacyl-[ACP] = a (2E)-enoyl-[ACP] + H2O. It catalyses the reaction (3R)-hydroxydecanoyl-[ACP] = (2E)-decenoyl-[ACP] + H2O. The enzyme catalyses (2E)-decenoyl-[ACP] = (3Z)-decenoyl-[ACP]. It functions in the pathway lipid metabolism; fatty acid biosynthesis. Necessary for the introduction of cis unsaturation into fatty acids. Catalyzes the dehydration of (3R)-3-hydroxydecanoyl-ACP to E-(2)-decenoyl-ACP and then its isomerization to Z-(3)-decenoyl-ACP. Can catalyze the dehydratase reaction for beta-hydroxyacyl-ACPs with saturated chain lengths up to 16:0, being most active on intermediate chain length. This chain is 3-hydroxydecanoyl-[acyl-carrier-protein] dehydratase, found in Aliivibrio fischeri (strain ATCC 700601 / ES114) (Vibrio fischeri).